The sequence spans 331 residues: Ketol-acid reductoisomerase (NADP(+)) (331 aa).

Residues 2–182 (AQLFYDSDAD…GGTRAGILET (181 aa)) form the KARI N-terminal Rossmann domain. NADP(+) is bound by residues 25 to 28 (YGSQ), Ser51, Ser53, and 83 to 86 (DEFQ). His108 is a catalytic residue. Gly134 serves as a coordination point for NADP(+). Residues 183–328 (NFKEETETDL…KGLRAMFSWL (146 aa)) form the KARI C-terminal knotted domain. Mg(2+) contacts are provided by Asp191, Glu195, Glu227, and Glu231. Ser252 contacts substrate.

The protein belongs to the ketol-acid reductoisomerase family. Requires Mg(2+) as cofactor.

The catalysed reaction is (2R)-2,3-dihydroxy-3-methylbutanoate + NADP(+) = (2S)-2-acetolactate + NADPH + H(+). It catalyses the reaction (2R,3R)-2,3-dihydroxy-3-methylpentanoate + NADP(+) = (S)-2-ethyl-2-hydroxy-3-oxobutanoate + NADPH + H(+). It functions in the pathway amino-acid biosynthesis; L-isoleucine biosynthesis; L-isoleucine from 2-oxobutanoate: step 2/4. Its pathway is amino-acid biosynthesis; L-valine biosynthesis; L-valine from pyruvate: step 2/4. Involved in the biosynthesis of branched-chain amino acids (BCAA). Catalyzes an alkyl-migration followed by a ketol-acid reduction of (S)-2-acetolactate (S2AL) to yield (R)-2,3-dihydroxy-isovalerate. In the isomerase reaction, S2AL is rearranged via a Mg-dependent methyl migration to produce 3-hydroxy-3-methyl-2-ketobutyrate (HMKB). In the reductase reaction, this 2-ketoacid undergoes a metal-dependent reduction by NADPH to yield (R)-2,3-dihydroxy-isovalerate. In Prochlorococcus marinus (strain MIT 9211), this protein is Ketol-acid reductoisomerase (NADP(+)).